The sequence spans 375 residues: E3 ubiquitin-protein ligase FANCL (375 aa).

N-acetylalanine is present on Ala2. The segment at 104-294 (LPPPPQFYSS…KDVLEIDFPA (191 aa)) is UBC-RWD region (URD). Residues Cys307, Cys310, Cys324, Cys329, His334, Cys337, Cys359, and Cys362 each contribute to the Zn(2+) site. The segment at 307–363 (CGICYAYQLDGTIPDQVCDNSQCGQPFHQICLYEWLRGLLTSRQSFNIIFGECPYCS) adopts an RING-type; degenerate zinc-finger fold.

As to quaternary structure, interacts with GGN. Belongs to the multisubunit FA complex composed of FANCA, FANCB, FANCC, FANCE, FANCF, FANCG, FANCL/PHF9 and FANCM. The complex is not found in FA patients. In complex with FANCF, FANCA and FANCG, but not with FANCC, nor FANCE, interacts with HES1; this interaction may be essential for the stability and nuclear localization of FA core complex proteins. Interacts with FANCI. Directly interacts (via the RING-type zinc finger) with UBE2T and UBE2W. The RING-type zinc finger domain is monoubiquitinated in the presence of UBE2T and UBE2W.

It localises to the cytoplasm. It is found in the nucleus. The enzyme catalyses S-ubiquitinyl-[E2 ubiquitin-conjugating enzyme]-L-cysteine + [acceptor protein]-L-lysine = [E2 ubiquitin-conjugating enzyme]-L-cysteine + N(6)-ubiquitinyl-[acceptor protein]-L-lysine.. It functions in the pathway protein modification; protein ubiquitination. In terms of biological role, ubiquitin ligase protein that mediates monoubiquitination of FANCD2 in the presence of UBE2T, a key step in the DNA damage pathway. Also mediates monoubiquitination of FANCI. May stimulate the ubiquitin release from UBE2W. May be required for proper primordial germ cell proliferation in the embryonic stage, whereas it is probably not needed for spermatogonial proliferation after birth. This is E3 ubiquitin-protein ligase FANCL (FANCL) from Homo sapiens (Human).